We begin with the raw amino-acid sequence, 134 residues long: Large ribosomal subunit protein uL14 (134 aa).

It belongs to the universal ribosomal protein uL14 family. In terms of assembly, in the 70S ribosome, L14 and L19 interact and together make contacts with the 16S rRNA in bridges B5 and B8. Part of the 50S ribosomal subunit. Forms a cluster with proteins L3 and L19.

In terms of biological role, forms part of two intersubunit bridges in the 70S ribosome. Binds to 23S rRNA. The protein is Large ribosomal subunit protein uL14 of Deinococcus radiodurans (strain ATCC 13939 / DSM 20539 / JCM 16871 / CCUG 27074 / LMG 4051 / NBRC 15346 / NCIMB 9279 / VKM B-1422 / R1).